The following is a 247-amino-acid chain: GTP cyclohydrolase 1 type 2 homolog (247 aa).

Residues His63, His64, Asp101, His215, and Glu219 each contribute to the a divalent metal cation site.

Belongs to the GTP cyclohydrolase I type 2/NIF3 family. As to quaternary structure, toroid-shaped homohexamer. In the hexamer, 3 dimers assemble to form a ring-like structure surrounding a central hole.

Functionally, provides significant protection from radiation damage and may be involved in the degradation of radiation-damaged nucleotides. This chain is GTP cyclohydrolase 1 type 2 homolog (ybgI), found in Escherichia coli O157:H7.